We begin with the raw amino-acid sequence, 897 residues long: 4-hydroxyphenylacetate decarboxylase glycyl radical subunit (897 aa).

Residues 35 to 770 form the PFL domain; it reads ESTQKLMDIY…VTLATADGRL (736 aa). 4-hydroxyphenylacetate contacts are provided by Ser344 and Cys503. Cys503 acts as the Cysteine radical intermediate in catalysis. The Proton donor role is filled by Glu505. 4-hydroxyphenylacetate-binding residues include His536 and Glu637. Residues 778–897 enclose the Glycine radical domain; that stretch reads GSVSAAAGTD…EVIYRTEYDK (120 aa). Gly873 bears the Glycine radical mark.

This sequence belongs to the glycyl radical enzyme (GRE) family. HPAD subfamily. As to quaternary structure, heterooctamer consisting of 4 large (HpdB) subunits and 4 small (HpdC) subunits, arranged as a tetramer of heterodimers. Also forms a catalytically inactive homodimer. In terms of processing, requires the activating protein CsdA to generate the key active site glycyl radical that is involved in catalysis. Post-translationally, phosphorylated on serine. Phosphorylation may trigger the formation of the active heterooctamers and thereby regulates enzyme activity.

The catalysed reaction is 4-hydroxyphenylacetate + H(+) = 4-methylphenol + CO2. It carries out the reaction 3,4-dihydroxyphenylacetate + H(+) = 4-methylcatechol + CO2. Functionally, glycyl radical subunit of the HPA decarboxylase that decarboxylates phenylacetates with a hydroxyl group in the p-position. Active toward 4-hydroxyphenylacetate and 3,4-dihydroxyphenylacetate, forming 4-methylphenol and 4-methylcatechol, respectively. Is likely involved in the catabolism of aromatic amino acids such as tyrosine fermentation. 4-methylphenol (p-cresol) formation provides metabolic toxicity, which allows an active suppression of other microbes and may provide growth advantages for the producers in highly competitive environments. The large subunit is the catalytic subunit that binds the substrate. This Clostridium scatologenes protein is 4-hydroxyphenylacetate decarboxylase glycyl radical subunit.